We begin with the raw amino-acid sequence, 295 residues long: Zinc finger C2H2 protein ECU08_0560 (295 aa).

C2H2-type zinc fingers lie at residues 219-243 and 249-273; these read FVCT…NLMH and HKCR…YKVH.

This chain is Zinc finger C2H2 protein ECU08_0560, found in Encephalitozoon cuniculi (strain GB-M1) (Microsporidian parasite).